The chain runs to 617 residues: Glutamyl-tRNA(Gln) amidotransferase subunit B, mitochondrial (617 aa).

The transit peptide at 1-56 (MPRIPTSVLGKYLLSGQISRQGCVGARQITRHSALPSAAVSVANSARLLHVSSETV) directs the protein to the mitochondrion. The tract at residues 53 to 90 (SETVPPPPAQPVPLRKQLKDEAKKAKKQGKKKSKGDSQ) is disordered. Positions 76 to 85 (KAKKQGKKKS) are enriched in basic residues.

The protein belongs to the GatB/GatE family. GatB subfamily. In terms of assembly, subunit of the heterotrimeric GatCAB amidotransferase (AdT) complex, composed of A, B and C subunits.

The protein resides in the mitochondrion. The catalysed reaction is L-glutamyl-tRNA(Gln) + L-glutamine + ATP + H2O = L-glutaminyl-tRNA(Gln) + L-glutamate + ADP + phosphate + H(+). Functionally, allows the formation of correctly charged Gln-tRNA(Gln) through the transamidation of misacylated Glu-tRNA(Gln) in the mitochondria. The reaction takes place in the presence of glutamine and ATP through an activated gamma-phospho-Glu-tRNA(Gln). The sequence is that of Glutamyl-tRNA(Gln) amidotransferase subunit B, mitochondrial from Fusarium vanettenii (strain ATCC MYA-4622 / CBS 123669 / FGSC 9596 / NRRL 45880 / 77-13-4) (Fusarium solani subsp. pisi).